Here is a 297-residue protein sequence, read N- to C-terminus: Phosphoribosylaminoimidazole-succinocarboxamide synthase (297 aa).

The protein belongs to the SAICAR synthetase family.

It carries out the reaction 5-amino-1-(5-phospho-D-ribosyl)imidazole-4-carboxylate + L-aspartate + ATP = (2S)-2-[5-amino-1-(5-phospho-beta-D-ribosyl)imidazole-4-carboxamido]succinate + ADP + phosphate + 2 H(+). The protein operates within purine metabolism; IMP biosynthesis via de novo pathway; 5-amino-1-(5-phospho-D-ribosyl)imidazole-4-carboxamide from 5-amino-1-(5-phospho-D-ribosyl)imidazole-4-carboxylate: step 1/2. The sequence is that of Phosphoribosylaminoimidazole-succinocarboxamide synthase from Mycobacterium marinum (strain ATCC BAA-535 / M).